A 444-amino-acid chain; its full sequence is N-succinylarginine dihydrolase (444 aa).

Substrate is bound by residues serine 19–serine 28, asparagine 110, and histidine 137–arginine 138. Residue glutamate 174 is part of the active site. Position 214 (arginine 214) interacts with substrate. Histidine 250 is a catalytic residue. The substrate site is built by aspartate 252 and asparagine 362. The active-site Nucleophile is the cysteine 368.

The protein belongs to the succinylarginine dihydrolase family. In terms of assembly, homodimer.

The enzyme catalyses N(2)-succinyl-L-arginine + 2 H2O + 2 H(+) = N(2)-succinyl-L-ornithine + 2 NH4(+) + CO2. It functions in the pathway amino-acid degradation; L-arginine degradation via AST pathway; L-glutamate and succinate from L-arginine: step 2/5. Its function is as follows. Catalyzes the hydrolysis of N(2)-succinylarginine into N(2)-succinylornithine, ammonia and CO(2). This Aliivibrio salmonicida (strain LFI1238) (Vibrio salmonicida (strain LFI1238)) protein is N-succinylarginine dihydrolase.